Consider the following 271-residue polypeptide: GTP cyclohydrolase FolE2 (271 aa).

The protein belongs to the GTP cyclohydrolase IV family.

It carries out the reaction GTP + H2O = 7,8-dihydroneopterin 3'-triphosphate + formate + H(+). It participates in cofactor biosynthesis; 7,8-dihydroneopterin triphosphate biosynthesis; 7,8-dihydroneopterin triphosphate from GTP: step 1/1. Its function is as follows. Converts GTP to 7,8-dihydroneopterin triphosphate. The protein is GTP cyclohydrolase FolE2 of Geotalea uraniireducens (strain Rf4) (Geobacter uraniireducens).